The primary structure comprises 144 residues: HMG1/2-like protein (144 aa).

Disordered regions lie at residues 1 to 42 (MKGG…PPSA) and 85 to 144 (PFIS…EDDD). Composition is skewed to basic and acidic residues over residues 8-35 (AKSDNKLAVKKQAADTKKTKKAVKDPNK) and 89-99 (KAEKRKQEYEK). Residues 36–105 (PKRPPSAFFV…EYEKNLQAYN (70 aa)) constitute a DNA-binding region (HMG box). A compositionally biased stretch (acidic residues) spans 126 to 144 (NDDDEDQDGSGEDDSEDDD).

It belongs to the HMGB family. As to expression, expressed at higher levels in dark-grown tissues, such as roots; and at lower levels in light-grown tissues, such as cotyledons and stems.

Its subcellular location is the nucleus. This Ipomoea nil (Japanese morning glory) protein is HMG1/2-like protein.